A 179-amino-acid chain; its full sequence is Large ribosomal subunit protein uL6 (179 aa).

Belongs to the universal ribosomal protein uL6 family. Part of the 50S ribosomal subunit.

In terms of biological role, this protein binds to the 23S rRNA, and is important in its secondary structure. It is located near the subunit interface in the base of the L7/L12 stalk, and near the tRNA binding site of the peptidyltransferase center. This Koribacter versatilis (strain Ellin345) protein is Large ribosomal subunit protein uL6.